A 476-amino-acid polypeptide reads, in one-letter code: Adenosylhomocysteinase (476 aa).

Substrate is bound by residues threonine 67, aspartate 142, and glutamate 202. Threonine 203–threonine 205 is a binding site for NAD(+). Substrate is bound by residues lysine 232 and aspartate 236. Residues asparagine 237, glycine 266–glycine 271, glutamate 289, asparagine 324, isoleucine 345–histidine 347, and asparagine 390 contribute to the NAD(+) site.

The protein belongs to the adenosylhomocysteinase family. The cofactor is NAD(+).

Its subcellular location is the cytoplasm. The enzyme catalyses S-adenosyl-L-homocysteine + H2O = L-homocysteine + adenosine. It functions in the pathway amino-acid biosynthesis; L-homocysteine biosynthesis; L-homocysteine from S-adenosyl-L-homocysteine: step 1/1. Functionally, may play a key role in the regulation of the intracellular concentration of adenosylhomocysteine. This is Adenosylhomocysteinase from Prochlorococcus marinus (strain MIT 9303).